A 446-amino-acid polypeptide reads, in one-letter code: D(1A) dopamine receptor (446 aa).

The Extracellular portion of the chain corresponds to 1–23 (MRTLNTSTMDGTGLVVERDFSFR). A glycan (N-linked (GlcNAc...) asparagine) is linked at asparagine 5. A helical membrane pass occupies residues 24 to 49 (ILTACFLSLLILSTLLGNTLVCAAVI). At 50 to 60 (RFRHLRSKVTN) the chain is on the cytoplasmic side. A helical membrane pass occupies residues 61-87 (FFVISLAVSDLLVAVLVMPWKAVAEIA). Residues 88–96 (GFWPFGSFC) lie on the Extracellular side of the membrane. Cysteine 96 and cysteine 186 form a disulfide bridge. The chain crosses the membrane as a helical span at residues 97–119 (NIWVAFDIMCSTASILNLCVISV). The Cytoplasmic segment spans residues 120–138 (DRYWAISSPFRYERKMTPK). The chain crosses the membrane as a helical span at residues 139-163 (AAFILISVAWTLSVLISFIPVQLSW). The Extracellular segment spans residues 164–192 (HKAKPTSPSDGNVTSLGKTTHNCDSSLSR). Residues 193 to 218 (TYAISSSLISFYIPVAIMIVTYTRIY) traverse the membrane as a helical segment. Topologically, residues 219-272 (RIAQKQIRRISALERAAVHAKNCQTTAGNGNPAECSQPESSFKMSFKRETKVLK) are cytoplasmic. The helical transmembrane segment at 273–299 (TLSVIMGVFVCCWLPFFILNCMVPFCG) threads the bilayer. At 300–312 (SGETKPFCIDSIT) the chain is on the extracellular side. A helical membrane pass occupies residues 313-337 (FDVFVWFGWANSSLNPIIYAFNADF). The Cytoplasmic portion of the chain corresponds to 338–446 (RKAFSTLLGC…PITQNGQHPT (109 aa)). S-palmitoyl cysteine attachment occurs at residues cysteine 347 and cysteine 351.

Belongs to the G-protein coupled receptor 1 family. In terms of assembly, interacts with DNAJC14 via its C-terminus. Interacts with DRD2. Interacts with DORIP1.

It localises to the cell membrane. It is found in the endoplasmic reticulum membrane. The protein resides in the cell projection. Its subcellular location is the cilium membrane. The protein localises to the dendrite. It localises to the dendritic spine. In terms of biological role, dopamine receptor whose activity is mediated by G proteins which activate adenylyl cyclase. This is D(1A) dopamine receptor (DRD1) from Sus scrofa (Pig).